Here is a 100-residue protein sequence, read N- to C-terminus: NADH-quinone oxidoreductase subunit K (100 aa).

3 helical membrane-spanning segments follow: residues 2–22 (IPLS…VAGF), 28–48 (IIVM…NLVA), and 64–84 (FVIT…ICLF).

It belongs to the complex I subunit 4L family. As to quaternary structure, NDH-1 is composed of 14 different subunits. Subunits NuoA, H, J, K, L, M, N constitute the membrane sector of the complex.

It is found in the cell inner membrane. It carries out the reaction a quinone + NADH + 5 H(+)(in) = a quinol + NAD(+) + 4 H(+)(out). Functionally, NDH-1 shuttles electrons from NADH, via FMN and iron-sulfur (Fe-S) centers, to quinones in the respiratory chain. The immediate electron acceptor for the enzyme in this species is believed to be ubiquinone. Couples the redox reaction to proton translocation (for every two electrons transferred, four hydrogen ions are translocated across the cytoplasmic membrane), and thus conserves the redox energy in a proton gradient. The polypeptide is NADH-quinone oxidoreductase subunit K (Desulfovibrio desulfuricans (strain ATCC 27774 / DSM 6949 / MB)).